Consider the following 960-residue polypeptide: Dynamin-like GTPase OPA1, mitochondrial (960 aa).

The N-terminal 87 residues, 1 to 87 (MWRLRRAAVA…IKYGYQPRRN (87 aa)), are a transit peptide targeting the mitochondrion. At 88-96 (FWPARLATR) the chain is on the mitochondrial matrix side. The chain crosses the membrane as a helical span at residues 97–113 (LLKLRYLILGSAVGGGY). Residues 114 to 770 (TAKKTFDQWK…NAIENMVGPD (657 aa)) are Mitochondrial intermembrane-facing. Short sequence motifs (LQQQIQ motif) lie at residues 181-186 (DFFTSG) and 217-222 (QLQEEL). Positions 210-254 (SDKEKIDQLQEELLHTQLKYQRILERLEKENKELRKLVLQKDDKG) form a coiled coil. K228 carries the N6-acetyllysine modification. The LQQQIQ motif signature appears at 235 to 240 (RLEKEN). The Dynamin-type G domain maps to 285-561 (QDHLPRVVVV…FWKMVRESVE (277 aa)). A G1 motif region spans residues 295–302 (GDQSAGKT). Residues S298, G300, K301, T302, S303, and G317 each contribute to the GTP site. T302 provides a ligand contact to Mg(2+). The segment at 321–324 (MMTR) is G2 motif. Residues T323 and D398 each contribute to the Mg(2+) site. The segment at 398 to 401 (DLPG) is G3 motif. The segment at 467-470 (TKVD) is G4 motif. Residues K468, D470, T503, G506, and N507 each contribute to the GTP site. The G5 motif stretch occupies residues 501 to 504 (VVTG). Stalk region regions lie at residues 589–836 (DRNE…IKDT) and 874–928 (CNDV…IKLL). Positions 736 to 856 (SDKQQWDAAI…KTALNHCNLC (121 aa)) are paddle region. An intramembrane segment occupies 771–781 (WKKRWLYWKNR). Residues 782-960 (TQEQCVHNET…AFIEALHQEK (179 aa)) lie on the Mitochondrial intermembrane side of the membrane. C856 and C874 are oxidised to a cystine. A coiled-coil region spans residues 895 to 960 (RQQLTNTEVR…AFIEALHQEK (66 aa)).

The protein belongs to the TRAFAC class dynamin-like GTPase superfamily. Dynamin/Fzo/YdjA family. As to quaternary structure, oligomeric complex consisting of membrane-bound and soluble forms of OPA1. Interacts with RCC1L; RCC1L acts as a guanine nucleotide exchange factor (GEF) for OPA1 by exchanging bound GDP for free GTP. Interacts with CHCHD3 and IMMT; these interactions occur preferentially with soluble OPA1 forms. Interacts with PRELID1. Post-translationally, cleaved by OMA1 or YME1L downstream of the transmembrane region in response to different signals to generate soluble forms. Cleaved by OMA1 at position S1 following stress conditions, generating the short soluble form (Dynamin-like GTPase OPA1, short form; S-OPA1). AFG3L2 is involved in the regulation of OMA1-dependent processing of OPA1. PARL-dependent proteolytic processing releases an antiapoptotic soluble form not required for mitochondrial fusion. In terms of processing, cleavage at position S2 by YME1L is required to mediate oxidative phosphorylation (OXPHOS)-induced mitochondrial fusion. Cleavage occurs in the sequence motif Leu-Gln-Gln-Gln-Ile-Gln (LQQQIQ). Cleavage at position S2 by YME1L is required to mediate oxidative phosphorylation (OXPHOS)-induced mitochondrial fusion. Cleavage occurs in the sequence motif Leu-Gln-Gln-Gln-Ile-Gln (LQQQIQ). Cleavage at position S3 by YME1L is required for membrane tubulation. Post-translationally, cleavage at position S3 by YME1L is required for membrane tubulation. Highly expressed in retina. Also expressed in brain, testis, heart and skeletal muscle. Low levels of all isoforms expressed in a variety of tissues. In terms of tissue distribution, expressed in retina, skeletal muscle, heart, lung, ovary, colon, thyroid gland, leukocytes and fetal brain. Low levels of all isoforms expressed in a variety of tissues. As to expression, isoform 2 expressed in colon, liver, kidney, thyroid gland and leukocytes.

The protein localises to the mitochondrion inner membrane. It is found in the mitochondrion intermembrane space. The catalysed reaction is GTP + H2O = GDP + phosphate + H(+). Activated by guanine nucleotide exchange factor RCC1L. Its function is as follows. Dynamin-related GTPase that is essential for normal mitochondrial morphology by mediating fusion of the mitochondrial inner membranes, regulating cristae morphology and maintaining respiratory chain function. Exists in two forms: the transmembrane, long form (Dynamin-like GTPase OPA1, long form; L-OPA1), which is tethered to the inner mitochondrial membrane, and the short soluble form (Dynamin-like GTPase OPA1, short form; S-OPA1), which results from proteolytic cleavage and localizes in the intermembrane space. Both forms (L-OPA1 and S-OPA1) cooperate to catalyze the fusion of the mitochondrial inner membrane. The equilibrium between L-OPA1 and S-OPA1 is essential: excess levels of S-OPA1, produced by cleavage by OMA1 following loss of mitochondrial membrane potential, lead to an impaired equilibrium between L-OPA1 and S-OPA1, inhibiting mitochondrial fusion. The balance between L-OPA1 and S-OPA1 also influences cristae shape and morphology. Involved in remodeling cristae and the release of cytochrome c during apoptosis. Proteolytic processing by PARL in response to intrinsic apoptotic signals may lead to disassembly of OPA1 oligomers and release of the caspase activator cytochrome C (CYCS) into the mitochondrial intermembrane space. Acts as a regulator of T-helper Th17 cells, which are characterized by cells with fused mitochondria with tight cristae, by mediating mitochondrial membrane remodeling: OPA1 is required for interleukin-17 (IL-17) production. Its role in mitochondrial morphology is required for mitochondrial genome maintenance. In terms of biological role, constitutes the transmembrane long form (L-OPA1) that plays a central role in mitochondrial inner membrane fusion and cristae morphology. L-OPA1 and the soluble short form (S-OPA1) form higher-order helical assemblies that coordinate the fusion of mitochondrial inner membranes. Inner membrane-anchored L-OPA1 molecules initiate membrane remodeling by recruiting soluble S-OPA1 to rapidly polymerize into a flexible cylindrical scaffold encaging the mitochondrial inner membrane. Once at the membrane surface, the formation of S-OPA1 helices induce bilayer curvature. OPA1 dimerization through the paddle region, which inserts into cardiolipin-containing membrane, promotes GTP hydrolysis and the helical assembly of a flexible OPA1 lattice on the membrane, which drives membrane curvature and mitochondrial fusion. Plays a role in the maintenance and remodeling of mitochondrial cristae, some invaginations of the mitochondrial inner membrane that provide an increase in the surface area. Probably acts by forming helical filaments at the inside of inner membrane tubes with the shape and dimensions of crista junctions. The equilibrium between L-OPA1 and S-OPA1 influences cristae shape and morphology: increased L-OPA1 levels promote cristae stacking and elongated mitochondria, while increased S-OPA1 levels correlated with irregular cristae packing and round mitochondria shape. Constitutes the soluble short form (S-OPA1) generated by cleavage by OMA1, which plays a central role in mitochondrial inner membrane fusion and cristae morphology. The transmembrane long form (L-OPA1) and the S-OPA1 form higher-order helical assemblies that coordinate the fusion of mitochondrial inner membranes. Inner membrane-anchored L-OPA1 molecules initiate membrane remodeling by recruiting soluble S-OPA1 to rapidly polymerize into a flexible cylindrical scaffold encaging the mitochondrial inner membrane. Once at the membrane surface, the formation of S-OPA1 helices induce bilayer curvature. OPA1 dimerization through the paddle region, which inserts into cardiolipin-containing membrane, promotes GTP hydrolysis and the helical assembly of a flexible OPA1 lattice on the membrane, which drives membrane curvature and mitochondrial fusion. Excess levels of S-OPA1 produced by cleavage by OMA1 following stress conditions that induce loss of mitochondrial membrane potential, lead to an impaired equilibrium between L-OPA1 and S-OPA1, thereby inhibiting mitochondrial fusion. Involved in mitochondrial safeguard in response to transient mitochondrial membrane depolarization by mediating flickering: cleavage by OMA1 leads to excess production of S-OPA1, preventing mitochondrial hyperfusion. Plays a role in the maintenance and remodeling of mitochondrial cristae, some invaginations of the mitochondrial inner membrane that provide an increase in the surface area. Probably acts by forming helical filaments at the inside of inner membrane tubes with the shape and dimensions of crista junctions. The equilibrium between L-OPA1 and S-OPA1 influences cristae shape and morphology: increased L-OPA1 levels promote cristae stacking and elongated mitochondria, while increased S-OPA1 levels correlated with irregular cristae packing and round mitochondria shape. Functionally, coexpression of isoform 1 with shorter alternative products is required for optimal activity in promoting mitochondrial fusion. Its function is as follows. Isoforms that contain the alternative exon 4b are required for mitochondrial genome maintenance, possibly by anchoring the mitochondrial nucleoids to the inner mitochondrial membrane. The sequence is that of Dynamin-like GTPase OPA1, mitochondrial from Homo sapiens (Human).